A 658-amino-acid chain; its full sequence is Scarecrow-like protein 28 (658 aa).

Disordered regions lie at residues 43 to 85 (PCSS…TSGC), 96 to 115 (LATTRGNGEGFSWNNDNNNR), and 209 to 265 (PAAV…NNNR). Positions 214-228 (EASGGSSTSASSESR) are enriched in low complexity. The GRAS domain occupies 265–654 (RNDLQRDFEL…QPLYTISAWT (390 aa)). A leucine repeat I (LRI) region spans residues 272 to 336 (FELVNLLTGC…VARMWPHIFH (65 aa)). A VHIID region spans residues 355-420 (LRFLNQVTPI…NPPHHVRITG (66 aa)). A VHIID motif is present at residues 386–390 (VHIID). The interval 430–462 (ETGDRLHGFAEAMNLQFEFHPVVDRLEDVRLWM) is leucine repeat II (LRII). A PFYRE region spans residues 471–563 (VAVNCVMQMH…EMLFGREIRN (93 aa)). Residues 566-654 (ACEGSHRQER…QPLYTISAWT (89 aa)) form an SAW region.

The protein belongs to the GRAS family. In terms of assembly, interacts with SNRNP35 and CYP95. As to expression, expressed in roots and sepals.

The protein resides in the nucleus. Functionally, probable transcription factor involved in plant development. The sequence is that of Scarecrow-like protein 28 (SCL28) from Arabidopsis thaliana (Mouse-ear cress).